The primary structure comprises 465 residues: Asparagine--tRNA ligase (465 aa).

Belongs to the class-II aminoacyl-tRNA synthetase family. Homodimer.

It localises to the cytoplasm. The enzyme catalyses tRNA(Asn) + L-asparagine + ATP = L-asparaginyl-tRNA(Asn) + AMP + diphosphate + H(+). The sequence is that of Asparagine--tRNA ligase from Clostridium perfringens (strain ATCC 13124 / DSM 756 / JCM 1290 / NCIMB 6125 / NCTC 8237 / Type A).